A 314-amino-acid chain; its full sequence is 2,3-dihydroxyphenylpropionate/2,3-dihydroxicinnamic acid 1,2-dioxygenase (314 aa).

The active-site Proton donor is His-115. His-179 (proton acceptor) is an active-site residue.

This sequence belongs to the LigB/MhpB extradiol dioxygenase family. Homotetramer. The cofactor is Fe(2+).

The enzyme catalyses 3-(2,3-dihydroxyphenyl)propanoate + O2 = (2Z,4E)-2-hydroxy-6-oxonona-2,4-dienedioate + H(+). The catalysed reaction is (2E)-3-(2,3-dihydroxyphenyl)prop-2-enoate + O2 = (2Z,4E,7E)-2-hydroxy-6-oxonona-2,4,7-trienedioate + H(+). It functions in the pathway aromatic compound metabolism; 3-phenylpropanoate degradation. Catalyzes the non-heme iron(II)-dependent oxidative cleavage of 2,3-dihydroxyphenylpropionic acid and 2,3-dihydroxicinnamic acid into 2-hydroxy-6-ketononadienedioate and 2-hydroxy-6-ketononatrienedioate, respectively. The chain is 2,3-dihydroxyphenylpropionate/2,3-dihydroxicinnamic acid 1,2-dioxygenase from Klebsiella pneumoniae (strain 342).